The sequence spans 514 residues: Threonine synthase (514 aa).

N6-(pyridoxal phosphate)lysine is present on Lys-117. Pyridoxal 5'-phosphate is bound by residues Gly-270, Asn-271, Phe-272, and Asp-274. Residues Ser-319 and Ser-321 each carry the phosphoserine modification. Pyridoxal 5'-phosphate is bound at residue Thr-449.

It belongs to the threonine synthase family. It depends on pyridoxal 5'-phosphate as a cofactor.

The catalysed reaction is O-phospho-L-homoserine + H2O = L-threonine + phosphate. It participates in amino-acid biosynthesis; L-threonine biosynthesis; L-threonine from L-aspartate: step 5/5. Catalyzes the gamma-elimination of phosphate from L-phosphohomoserine and the beta-addition of water to produce L-threonine. This chain is Threonine synthase (thrc), found in Schizosaccharomyces pombe (strain 972 / ATCC 24843) (Fission yeast).